The following is a 90-amino-acid chain: Small ribosomal subunit protein bS16 (90 aa).

Belongs to the bacterial ribosomal protein bS16 family.

In Streptococcus sanguinis (strain SK36), this protein is Small ribosomal subunit protein bS16.